Consider the following 200-residue polypeptide: VSSVISSSLFEKMLLHRGFYTYDAFIAAAKSFPAFATTGSTDVRKREVAAFLAQTSHETTGGWPTAPDGPYELGSTSDYFGRGPIQISYNYNYGAAGKAIGVDLLRNPDLVTSDNTVEFKTALWFWMTPQSPKPSSHDVITGRWSPSSTDKAAGRVPGYGVLTNIIDGGVECGKGQESHVADRIGYYKDNLDCYNQKPFA.

Glu58 serves as the catalytic Proton donor.

It belongs to the glycosyl hydrolase 19 family. Chitinase class I subfamily.

It carries out the reaction Random endo-hydrolysis of N-acetyl-beta-D-glucosaminide (1-&gt;4)-beta-linkages in chitin and chitodextrins.. Its function is as follows. This protein functions as a defense against chitin-containing fungal pathogens. The chain is Endochitinase from Avena sativa (Oat).